A 192-amino-acid polypeptide reads, in one-letter code: Cytochrome b-245 light chain (192 aa).

The Cytoplasmic segment spans residues 2 to 7 (GQIEWA). Residues 8 to 30 (MWANEQALASGLILMTGGIVATA) traverse the membrane as a helical segment. Topologically, residues 31–35 (GQFTQ) are extracellular. The chain crosses the membrane as a helical span at residues 36–53 (WYLGTYSIAAGVLVCLLE). Residues 54–69 (YPRGRRTKGSTMERCE) are Cytoplasmic-facing. Residues 70–80 (QKYMTKVVKAF) lie within the membrane without spanning it. The Cytoplasmic portion of the chain corresponds to 81-86 (GPLSRN). The helical transmembrane segment at 87 to 104 (YYIRAFLHLGLSVPAGFL) threads the bilayer. Leucine 105 is a topological domain (extracellular). The chain crosses the membrane as a helical span at residues 106–126 (ATILGTACLAIASGIYLLAAI). Over 127–192 (RGEQWTPIEP…TPCPVTDEVV (66 aa)) the chain is Cytoplasmic. Residues 134–192 (IEPKPKERPQVGGTIKQPPSNPPPRPPPEARKKPGEEAVAGVPRGAPRKTPCPVTDEVV) form a disordered region. The residue at position 147 (threonine 147) is a Phosphothreonine. Lysine 149 is covalently cross-linked (Glycyl lysine isopeptide (Lys-Gly) (interchain with G-Cter in ubiquitin)).

The protein belongs to the p22phox family. Component of the phagocyte NADPH oxidase core complex/cytochrome b558 complex, composed of CYBB (heavy chain (beta)) and CYBA (light chain (alpha)). Component of the phagocyte NADPH oxidase complex composed of an obligatory core heterodimer formed by the membrane proteins CYBA and CYBB and the cytosolic regulatory subunits NCF1/p47-phox, NCF2/p67-phox, NCF4/p40-phox and the small GTPase RAC1 or RAC2. Interacts with NCF1 (via SH3 domain). Interacts with SH3PXD2A. Interacts with DUOX1, DUOX2 and TPO. Interacts with NOX4; this interaction mediates superoxide generation. Interacts with calprotectin (S100A8/9). Interacts with GBP7. Interacts with NOXO1. Forms a heterodimer with NOX3 and is essential for activity and cell membrane localization of NOX3. Interacts with NOX1. Post-translationally, phosphorylation at Thr-147 enhances NADPH oxidase activity by promoting NCF1/p47-phox binding. Ubiquitinated at Lys-149 likely by RNF145.

The protein resides in the cell membrane. Its function is as follows. Subunit of NADPH oxidase complexes that is required for the NADPH oxidase activity that generates, in various cell types, superoxide from molecular oxygen utilizing NADPH as an electron donor. Subunit of the phagocyte NADPH oxidase complex that mediates the transfer of electrons from cytosolic NADPH to O2 to produce the superoxide anion (O2(-)). In the activated complex, electrons are first transferred from NADPH to flavin adenine dinucleotide (FAD) and subsequently transferred via two heme molecules to molecular oxygen, producing superoxide through an outer-sphere reaction. Activation of the NADPH oxidase complex is initiated by the assembly of cytosolic subunits of the NADPH oxidase complex with the core NADPH oxidase complex to form a complex at the plasma membrane or phagosomal membrane. This activation process is initiated by phosphorylation dependent binding of the cytosolic NCF1/p47-phox subunit to the C-terminus of CYBA/p22-phox. Aassociates with NOX3 to form a functional NADPH oxidase constitutively generating superoxide. This is Cytochrome b-245 light chain from Sus scrofa (Pig).